The primary structure comprises 273 residues: 29 kDa ribonucleoprotein A, chloroplastic (273 aa).

The transit peptide at 1 to 58 directs the protein to the chloroplast; it reads MASSASSLHFLSLTPQTLPLPKPTSQTTSLSFFSLPPSSLNLSLSSSSSCFSSRFVRK. The 79-residue stretch at 87-165 folds into the RRM 1 domain; the sequence is LKIFVGNLPF…RALRVNSGPP (79 aa). Positions 156–181 are disordered; it reads RALRVNSGPPPEKRENSSFRGGSRGG. A linker (Gly-rich) region spans residues 166-187; sequence PEKRENSSFRGGSRGGGSFDSS. One can recognise an RRM 2 domain in the interval 188-266; the sequence is NRVYVGNLAW…RAIRVSPAEA (79 aa).

The protein localises to the plastid. It is found in the chloroplast. Could be involved in splicing and/or processing of chloroplast RNA's. This Nicotiana sylvestris (Wood tobacco) protein is 29 kDa ribonucleoprotein A, chloroplastic.